The sequence spans 212 residues: Translation initiation factor IF-3 (212 aa).

The segment at 171–212 is disordered; that stretch reads PKSASKKGHTPPKTQVEASKQANESAETEEEKKRCHPTKPVL. A compositionally biased stretch (polar residues) spans 182–195; the sequence is PKTQVEASKQANES.

The protein belongs to the IF-3 family. In terms of assembly, monomer.

The protein resides in the cytoplasm. Its function is as follows. IF-3 binds to the 30S ribosomal subunit and shifts the equilibrium between 70S ribosomes and their 50S and 30S subunits in favor of the free subunits, thus enhancing the availability of 30S subunits on which protein synthesis initiation begins. The sequence is that of Translation initiation factor IF-3 from Porphyromonas gingivalis (strain ATCC 33277 / DSM 20709 / CIP 103683 / JCM 12257 / NCTC 11834 / 2561).